Here is a 122-residue protein sequence, read N- to C-terminus: Large ribosomal subunit protein bL12 (122 aa).

It belongs to the bacterial ribosomal protein bL12 family. Homodimer. Part of the ribosomal stalk of the 50S ribosomal subunit. Forms a multimeric L10(L12)X complex, where L10 forms an elongated spine to which 2 to 4 L12 dimers bind in a sequential fashion. Binds GTP-bound translation factors.

In terms of biological role, forms part of the ribosomal stalk which helps the ribosome interact with GTP-bound translation factors. Is thus essential for accurate translation. The chain is Large ribosomal subunit protein bL12 from Buchnera aphidicola subsp. Acyrthosiphon pisum (strain Tuc7).